Reading from the N-terminus, the 445-residue chain is tRNA-2-methylthio-N(6)-dimethylallyladenosine synthase (445 aa).

An MTTase N-terminal domain is found at 2 to 117 (QGLYIKSYGC…LPELIVKARK (116 aa)). 6 residues coordinate [4Fe-4S] cluster: C11, C47, C80, C157, C161, and C164. In terms of domain architecture, Radical SAM core spans 143–374 (KNQKVSAFIS…QELVHKQQLE (232 aa)). The TRAM domain occupies 377–441 (KKMIGETHPV…KNHLTGIIPN (65 aa)).

Belongs to the methylthiotransferase family. MiaB subfamily. As to quaternary structure, monomer. [4Fe-4S] cluster is required as a cofactor.

It localises to the cytoplasm. The enzyme catalyses N(6)-dimethylallyladenosine(37) in tRNA + (sulfur carrier)-SH + AH2 + 2 S-adenosyl-L-methionine = 2-methylsulfanyl-N(6)-dimethylallyladenosine(37) in tRNA + (sulfur carrier)-H + 5'-deoxyadenosine + L-methionine + A + S-adenosyl-L-homocysteine + 2 H(+). Functionally, catalyzes the methylthiolation of N6-(dimethylallyl)adenosine (i(6)A), leading to the formation of 2-methylthio-N6-(dimethylallyl)adenosine (ms(2)i(6)A) at position 37 in tRNAs that read codons beginning with uridine. In Ehrlichia ruminantium (strain Welgevonden), this protein is tRNA-2-methylthio-N(6)-dimethylallyladenosine synthase.